Reading from the N-terminus, the 123-residue chain is Basic phospholipase A2 Ph-TX1 (123 aa).

Ca(2+) is bound by residues Tyr27, Gly29, and Gly31. 6 cysteine pairs are disulfide-bonded: Cys28/Cys45, Cys44/Cys96, Cys50/Cys123, Cys51/Cys89, Cys59/Cys83, and Cys77/Cys87. His48 is an active-site residue. Asp49 contributes to the Ca(2+) binding site. Asp90 is a catalytic residue.

The protein belongs to the phospholipase A2 family. Group II subfamily. D49 sub-subfamily. Monomer. Requires Ca(2+) as cofactor. In terms of tissue distribution, expressed by the venom gland.

It is found in the secreted. The enzyme catalyses a 1,2-diacyl-sn-glycero-3-phosphocholine + H2O = a 1-acyl-sn-glycero-3-phosphocholine + a fatty acid + H(+). With respect to regulation, inhibited by divalent cations different from calcium ions (cadmium, magnesium, manganese, zinc), since they act as competitive antagonists of this cofactor. Functionally, snake venom phospholipase A2 (PLA2) that induces in vivo myotoxicity, moderates footpad edema, and causes in vitro neuromuscular blockade. PLA2 catalyzes the calcium-dependent hydrolysis of the 2-acyl groups in 3-sn-phosphoglycerides. The chain is Basic phospholipase A2 Ph-TX1 from Bothrocophias hyoprora (Amazonian hognose viper).